A 528-amino-acid chain; its full sequence is MTERRDNVSHAPDAIEGPNDGAHAEETSPGFFSFENLGVAQVQVVGGTLNGYVIGYVAVYLLLYLTATECKFTTEGACGGRKIYGCKWSGTTCKFENPKCSEGSDPSDSCKNEVAYTSVYSGIFACAMIVGSMVGSIIAGKCITTFGLKKSFIIVSITCTIACVVVQVAIEYNNYYALCTGRVLIGLGVGILCSVFPMYVNENAHPKLCKMDGVLFQVFTTLGIMLAAMLGLILDKTGASKEEANMAGRLHVFSAVPLGLSVAMFLVGMFLRESTATFAQDDDGKADGGMDPNEYGWGQMLWPLFMGAVTAGTLQLTGINAVMNYAPKITENLGMDPSLGNFLVMAWNFVTSLVAIPLASRFTMRQMFITCSFVASCMCLFLCGIPVFPGVAEEKVKNGVATTGIALFIAAFEFGVGSCFFVLAQDLFPPSFRPKGSSFVVMMQFIFNILINLLYPITTEAISGGATGDQDKGQAVVFILFGLIGLICFVLQFFYLYPYDANQDHENDHGTEPVERILSPVDVPTPRN.

Positions 1 to 22 (MTERRDNVSHAPDAIEGPNDGA) are disordered. The Cytoplasmic portion of the chain corresponds to 1 to 43 (MTERRDNVSHAPDAIEGPNDGAHAEETSPGFFSFENLGVAQVQ). Residues 44-64 (VVGGTLNGYVIGYVAVYLLLY) traverse the membrane as a helical segment. The Extracellular segment spans residues 65–118 (LTATECKFTTEGACGGRKIYGCKWSGTTCKFENPKCSEGSDPSDSCKNEVAYTS). Residues 119-139 (VYSGIFACAMIVGSMVGSIIA) form a helical membrane-spanning segment. Topologically, residues 140 to 151 (GKCITTFGLKKS) are cytoplasmic. A helical transmembrane segment spans residues 152–172 (FIIVSITCTIACVVVQVAIEY). The Extracellular portion of the chain corresponds to 173–175 (NNY). Residues 176–196 (YALCTGRVLIGLGVGILCSVF) form a helical membrane-spanning segment. The Cytoplasmic portion of the chain corresponds to 197-213 (PMYVNENAHPKLCKMDG). The chain crosses the membrane as a helical span at residues 214 to 234 (VLFQVFTTLGIMLAAMLGLIL). Residues 235-250 (DKTGASKEEANMAGRL) lie on the Extracellular side of the membrane. Residues 251 to 271 (HVFSAVPLGLSVAMFLVGMFL) form a helical membrane-spanning segment. Residues 272-301 (RESTATFAQDDDGKADGGMDPNEYGWGQML) lie on the Cytoplasmic side of the membrane. A helical transmembrane segment spans residues 302 to 322 (WPLFMGAVTAGTLQLTGINAV). At 323-338 (MNYAPKITENLGMDPS) the chain is on the extracellular side. Residues 339–359 (LGNFLVMAWNFVTSLVAIPLA) form a helical membrane-spanning segment. Over 360 to 367 (SRFTMRQM) the chain is Cytoplasmic. A helical transmembrane segment spans residues 368-388 (FITCSFVASCMCLFLCGIPVF). Over 389–403 (PGVAEEKVKNGVATT) the chain is Extracellular. The chain crosses the membrane as a helical span at residues 404–424 (GIALFIAAFEFGVGSCFFVLA). The Cytoplasmic segment spans residues 425-438 (QDLFPPSFRPKGSS). A helical transmembrane segment spans residues 439–459 (FVVMMQFIFNILINLLYPITT). At 460–475 (EAISGGATGDQDKGQA) the chain is on the extracellular side. The chain crosses the membrane as a helical span at residues 476–496 (VVFILFGLIGLICFVLQFFYL). Topologically, residues 497–528 (YPYDANQDHENDHGTEPVERILSPVDVPTPRN) are cytoplasmic. The tract at residues 507 to 528 (NDHGTEPVERILSPVDVPTPRN) is disordered.

It belongs to the major facilitator superfamily. Sugar transporter (TC 2.A.1.1) family.

Its subcellular location is the membrane. In terms of biological role, facilitative glucose transporter. The chain is Glucose transporter 1E (THT1E) from Trypanosoma brucei brucei.